The following is a 304-amino-acid chain: Polyisoprenyl-teichoic acid--peptidoglycan teichoic acid transferase TagU (304 aa).

At 1–3 (MKK) the chain is on the cytoplasmic side. A helical; Signal-anchor for type II membrane protein transmembrane segment spans residues 4–24 (ALIAIGLILGTITVAIIGYGI). Residues 25–304 (YLYSSIQNTA…GELKSHLELS (280 aa)) are Extracellular-facing.

The protein belongs to the LytR/CpsA/Psr (LCP) family.

Its subcellular location is the cell membrane. It participates in cell wall biogenesis. Functionally, may catalyze the final step in cell wall teichoic acid biosynthesis, the transfer of the anionic cell wall polymers (APs) from their lipid-linked precursor to the cell wall peptidoglycan (PG). In Halalkalibacterium halodurans (strain ATCC BAA-125 / DSM 18197 / FERM 7344 / JCM 9153 / C-125) (Bacillus halodurans), this protein is Polyisoprenyl-teichoic acid--peptidoglycan teichoic acid transferase TagU.